We begin with the raw amino-acid sequence, 114 residues long: Large ribosomal subunit protein uL24 (114 aa).

This sequence belongs to the universal ribosomal protein uL24 family. Part of the 50S ribosomal subunit.

Its function is as follows. One of two assembly initiator proteins, it binds directly to the 5'-end of the 23S rRNA, where it nucleates assembly of the 50S subunit. Functionally, one of the proteins that surrounds the polypeptide exit tunnel on the outside of the subunit. In Acidothermus cellulolyticus (strain ATCC 43068 / DSM 8971 / 11B), this protein is Large ribosomal subunit protein uL24.